The following is an 82-amino-acid chain: Large ribosomal subunit protein bL27c (82 aa).

The segment at 1–22 (MAHKKGAGSTKNGRDSNSKRLG) is disordered.

This sequence belongs to the bacterial ribosomal protein bL27 family.

It localises to the plastid. Its subcellular location is the chloroplast. The polypeptide is Large ribosomal subunit protein bL27c (rpl27) (Chrysotila carterae (Marine alga)).